The primary structure comprises 2591 residues: Eukaryotic translation initiation factor 2-alpha kinase PK4 (2591 aa).

Topologically, residues 1–16 are cytoplasmic; it reads MYNKGINICLNEDNKC. The chain crosses the membrane as a helical span at residues 17–37; it reads IILLHIIFNKCIVSFVASHIL. At 38–1488 the chain is on the lumenal side; sequence VEGKICFLNR…EFSSQKHKKS (1451 aa). The tract at residues 1028-1048 is disordered; that stretch reads KKKRNSKKGENRNKKRKTQKR. The chain crosses the membrane as a helical span at residues 1489-1509; it reads WYWNIFYAITLVIVIPFIFIY. Residues 1510–2591 lie on the Cytoplasmic side of the membrane; the sequence is RLFKKQTNNK…NIINGNEVDH (1082 aa). Positions 1781-1840 are disordered; sequence NLNSADEENKSPYAKKYSDEKKNRSKSSKYIENTQSNNNDNTNGNMNVGNHINNDKMNNK. Positions 1813–1832 are enriched in low complexity; the sequence is NTQSNNNDNTNGNMNVGNHI. ATP is bound by residues 1880–1888 and lysine 1905; that span reads IGQGGFGSV. Disordered stretches follow at residues 2123–2157 and 2183–2212; these read DNDESNGSGHSKKNDNDERKSLNNQNGIYNTGGDI and IKNTQGTSINGTINRNTISDETGTQGTNNN. Residues 2134 to 2143 show a composition bias toward basic and acidic residues; the sequence is KKNDNDERKS. The Protein kinase domain occupies 2181 to 2532; it reads MTIKNTQGTS…KIKVLLDPHL (352 aa). Residue aspartate 2369 is the Proton acceptor of the active site. Threonine 2436 bears the Phosphothreonine; by autocatalysis mark. The segment covering 2558-2574 has biased composition (polar residues); sequence STNPNGDIKENVNQNNL. The disordered stretch occupies residues 2558 to 2591; that stretch reads STNPNGDIKENVNQNNLVDDKGNNNIINGNEVDH. The span at 2580 to 2591 shows a compositional bias: low complexity; it reads NNNIINGNEVDH.

The protein belongs to the protein kinase superfamily. Ser/Thr protein kinase family. GCN2 subfamily. In terms of assembly, may form oligomers in response to stress; oligomerization may result in catalytic activity. Interacts with BIP; the interaction is disrupted in response to stress.

It localises to the endoplasmic reticulum membrane. It catalyses the reaction L-seryl-[protein] + ATP = O-phospho-L-seryl-[protein] + ADP + H(+). The enzyme catalyses L-threonyl-[protein] + ATP = O-phospho-L-threonyl-[protein] + ADP + H(+). With respect to regulation, dissociation from BIP and oligomerization, may results autophosphorylation and kinase activity induction. During the asexual blood stage, phosphorylates translation factor eIF2alpha in late schizonts resulting in protein translation inhibition. Plays a role in trophozoite differentiation into schizonts. The sequence is that of Eukaryotic translation initiation factor 2-alpha kinase PK4 from Plasmodium berghei (strain Anka).